The chain runs to 148 residues: Putative antiporter subunit mnhG2 (148 aa).

3 consecutive transmembrane segments (helical) span residues 11–31 (IAAI…IGLI), 51–71 (VLLT…YLSV), and 72–92 (RLIL…HLIS). The disordered stretch occupies residues 125–148 (EQLKQRAHEREERRRKTYEKEHDY). Basic and acidic residues predominate over residues 127 to 148 (LKQRAHEREERRRKTYEKEHDY).

The protein belongs to the CPA3 antiporters (TC 2.A.63) subunit G family. As to quaternary structure, may form a heterooligomeric complex that consists of seven subunits: mnhA2, mnhB2, mnhC2, mnhD2, mnhE2, mnhF2 and mnhG2.

The protein resides in the cell membrane. The sequence is that of Putative antiporter subunit mnhG2 (mnhG2) from Staphylococcus saprophyticus subsp. saprophyticus (strain ATCC 15305 / DSM 20229 / NCIMB 8711 / NCTC 7292 / S-41).